A 352-amino-acid chain; its full sequence is ADP-ribosylation factor GTPase-activating protein GCS1 (352 aa).

Residues 11–127 (RRRLLQLQKI…LTCLCEDRVF (117 aa)) form the Arf-GAP domain. A C4-type zinc finger spans residues 26-49 (CMDCGAPNPQWATPKFGAFICLEC). The span at 138–151 (SKLSATSQTAASAT) shows a compositional bias: low complexity. Disordered regions lie at residues 138–181 (SKLS…ANFQ) and 196–231 (NQSR…GSSN). T151 is subject to Phosphothreonine. S157 is subject to Phosphoserine. T161 is subject to Phosphothreonine. S168 is subject to Phosphoserine. Positions 168 to 179 (SATPANSSNGAN) are enriched in polar residues. A Phosphothreonine modification is found at T170. S260 bears the Phosphoserine mark. Positions 315-330 (NGNAEDSSTAGNTTHT) are enriched in polar residues. Residues 315-352 (NGNAEDSSTAGNTTHTEYQKIDNNDKKNEQDEDKWDDF) form a disordered region. Residues 331 to 343 (EYQKIDNNDKKNE) are compositionally biased toward basic and acidic residues.

Its subcellular location is the cytoplasm. The protein localises to the mitochondrion. The protein resides in the perinuclear region. It is found in the golgi apparatus. Functionally, GTPase-activating protein (GAP) for ARF1 and ARF2. Involved in intracellular vesicular transport. Required for transport from the trans-Golgi network. Implicated in the regulation of retrograde transport from the Golgi to the ER and in actin cytoskeletal organization. May be involved in the maintenance of mitochondrial morphology, possibly through organizing the actin cytoskeleton in Saccharomyces. The polypeptide is ADP-ribosylation factor GTPase-activating protein GCS1 (GCS1) (Saccharomyces cerevisiae (strain ATCC 204508 / S288c) (Baker's yeast)).